A 1218-amino-acid polypeptide reads, in one-letter code: NACHT, LRR and PYD domains-containing protein 1a allele 5 (1218 aa).

Over residues 1–29 (MGESQSKQESNTRVAQHGSQQDVDPTFQT) the composition is skewed to polar residues. Disordered stretches follow at residues 1 to 44 (MGES…QVEQ) and 71 to 91 (EMDHESRRHSHQSKKKLDRSE). Positions 77–87 (RRHSHQSKKKL) are enriched in basic residues. The NACHT domain maps to 175 to 484 (QLVIIEGAAG…EFFAAMSYIL (310 aa)). 181–188 (GAAGIGKS) is a binding site for ATP. LRR repeat units follow at residues 343–364 (KERNTIIDFNLIGSIPVLLTLC), 673–693 (NLEELDLSGNPLSYSAVRSLC), and 730–750 (RLAELDLRLNDLGDNGVRQLC). A compositionally biased stretch (polar residues) spans 799–815 (TMPTENTDGEESLTSSK). The segment at 799 to 842 (TMPTENTDGEESLTSSKQQQQQSGDKHMEPLGTDDDFWGPSGPV) is disordered. Positions 835–968 (FWGPSGPVST…HFAVLENPSF (134 aa)) are ZU5. An FIIND domain is found at 835–1118 (FWGPSGPVST…LRPALPRMAS (284 aa)). Residues 969–1118 (SPMGVLLRMI…LRPALPRMAS (150 aa)) are UPA. A CARD domain is found at 1122–1211 (DAPALLHFVD…HLIMDLLEKS (90 aa)).

The protein belongs to the NLRP family. In terms of assembly, interacts (via LRR repeats) with BCL2 and BCL2L1 (via the loop between motifs BH4 and BH3). Interacts with NOD2; this interaction is enhanced in the presence of muramyl dipeptide (MDP) and increases IL1B release. Interacts with EIF2AK2/PKR; this interaction requires EIF2AK2 activity, is accompanied by EIF2AK2 autophosphorylation and promotes inflammasome assembly in response to danger-associated signals. Interacts with MEFV; this interaction targets Nlrp1a to degradation by autophagy, hence preventing excessive IL1B- and IL18-mediated inflammation. Interacts with DPP9; leading to inhibit activation of the inflammasome. DPP9 acts via formation of a ternary complex, composed of a DPP9 homodimer, one full-length NLRP1 protein, and one cleaved C-terminus of Nlrp1a (NACHT, LRR and PYD domains-containing protein 1a, C-terminus). Interacts with DPP8; leading to inhibit activation of the inflammasome, probably via formation of a ternary complex with DPP8. As to quaternary structure, interacts with the C-terminal part of Nlrp1a (NACHT, LRR and PYD domains-containing protein 1a, C-terminus) in absence of pathogens and other damage-associated signals. Interacts with the N-terminal part of Nlrp1a (NACHT, LRR and PYD domains-containing protein 1a, N-terminus) in absence of pathogens and other damage-associated signals. Homomultimer; forms the Nlrp1a inflammasome polymeric complex, a filament composed of homopolymers of this form in response to pathogens and other damage-associated signals. The Nlrp1a inflammasome polymeric complex directly recruits pro-caspase-1 (proCASP1) independently of PYCARD/ASC. Interacts (via CARD domain) with CASP1 (via CARD domain); leading to CASP1 activation. Post-translationally, autocatalytically cleaved. Autocatalytic cleavage in FIIND region occurs constitutively, prior to activation signals, and is required for inflammasome activity (IL1B release), possibly by facilitating CASP1 binding. Both N- and C-terminal parts remain associated non-covalently. In terms of processing, ubiquitinated in response to pathogen-associated signals, leading to its degradation by the proteasome and subsequent release of the cleaved C-terminal part of the protein (NACHT, LRR and PYD domains-containing protein 1a, C-terminus), which polymerizes and forms the Nlrp1a inflammasome.

It localises to the cytoplasm. Its subcellular location is the cytosol. The protein resides in the nucleus. The protein localises to the inflammasome. Activated by pathogens and other damage-associated signals: activation promotes ubiquitination and degradation of the N-terminal part, releasing the cleaved C-terminal part of the protein (NACHT, LRR and PYD domains-containing protein 1a, C-terminus), which polymerizes and forms the Nlrp1a inflammasome. Nlrp1a inflammasome is inhibited by DPP8 and DPP9, which sequester the C-terminal fragment of Nlrp1a (NACHT, LRR and PYD domains-containing protein 1a, C-terminus) in a ternary complex, thereby preventing Nlrp1a oligomerization and activation. Nlrp1a inflammasome is strongly activated by Val-boroPro (Talabostat, PT-100), an inhibitor of dipeptidyl peptidases DPP8 and DPP9. Val-boroPro relieves inhibition of DPP8 and/or DPP9 by promoting disruption of the ternary complex, releasing its C-terminal part from autoinhibition. Not activated by cleavage by B.anthracis lethal toxin (LT) endopeptidase. Highly activated by Toxoplasma gondii. Its function is as follows. Acts as the sensor component of the Nlrp1a inflammasome, which mediates inflammasome activation in response to various pathogen-associated signals, leading to subsequent pyroptosis. Inflammasomes are supramolecular complexes that assemble in the cytosol in response to pathogens and other damage-associated signals and play critical roles in innate immunity and inflammation. Acts as a recognition receptor (PRR): recognizes specific pathogens and other damage-associated signals, such as Val-boroPro inhibitor, and mediates the formation of the inflammasome polymeric complex. In response to pathogen-associated signals, the N-terminal part of Nlrp1a is degraded by the proteasome, releasing the cleaved C-terminal part of the protein (NACHT, LRR and PYD domains-containing protein 1a, C-terminus), which polymerizes to initiate the formation of the inflammasome complex: the inflammasome directly recruits pro-caspase-1 (proCASP1) independently of PYCARD/ASC and promotes caspase-1 (CASP1) activation, which subsequently cleaves and activates inflammatory cytokines IL1B and IL18 and gasdermin-D (GSDMD), leading to pyroptosis. In the absence of GSDMD expression, the Nlrp1a inflammasome is able to recruit and activate CASP8, leading to activation of gasdermin-E (GSDME). Constitutes the precursor of the Nlrp1a inflammasome, which mediates autoproteolytic processing within the FIIND domain to generate the N-terminal and C-terminal parts, which are associated non-covalently in absence of pathogens and other damage-associated signals. In terms of biological role, regulatory part that prevents formation of the Nlrp1a inflammasome: in absence of pathogens and other damage-associated signals, interacts with the C-terminal part of Nlrp1a (NACHT, LRR and PYD domains-containing protein 1a, C-terminus), preventing activation of the Nlrp1a inflammasome. In response to pathogen-associated signals, this part is ubiquitinated by the N-end rule pathway and degraded by the proteasome, releasing the cleaved C-terminal part of the protein, which polymerizes and forms the Nlrp1a inflammasome. Functionally, constitutes the active part of the Nlrp1a inflammasome. In absence of pathogens and other damage-associated signals, interacts with the N-terminal part of Nlrp1a (NACHT, LRR and PYD domains-containing protein 1a, N-terminus), preventing activation of the Nlrp1a inflammasome. In response to pathogen-associated signals, the N-terminal part of Nlrp1a is degraded by the proteasome, releasing this form, which polymerizes to form the Nlrp1a inflammasome complex: the Nlrp1a inflammasome complex then directly recruits pro-caspase-1 (proCASP1) and promotes caspase-1 (CASP1) activation, leading to gasdermin-D (GSDMD) cleavage and subsequent pyroptosis. This is NACHT, LRR and PYD domains-containing protein 1a allele 5 from Rattus norvegicus (Rat).